The chain runs to 256 residues: MDSHSPIATVAQALRRAERILVITGAGLSADSGMPTYRGLGGLYNGRTEEGLPIEAALSGPMLRRDPALCWKYLAELGKACLAARPNAGHEAIAELQKHKPECWVLTQNIDGFHRQAGSPAERLIEIHGELAPLYCQSCGAESGGLEEHLHGQLPPRCAACGGVLRPPVVLFEEMLPEEAIDTLYRELRKGFDAVLVVGTTASFPYIVEPVLRTRQAGGFTAEVNPGVTDLSERVDVKMTGRALDIMPQVVSHIYR.

The region spanning 1-256 (MDSHSPIATV…MPQVVSHIYR (256 aa)) is the Deacetylase sirtuin-type domain. NAD(+)-binding positions include 25–44 (GAGL…GGLY) and 108–111 (QNID). The active-site Proton acceptor is the His-128. Residues Cys-136, Cys-139, Cys-158, and Cys-161 each coordinate Zn(2+). Residues 199–201 (GTT), 225–227 (NPG), and Ala-243 contribute to the NAD(+) site.

It belongs to the sirtuin family. Class III subfamily. Zn(2+) serves as cofactor.

The protein resides in the cytoplasm. The catalysed reaction is N(6)-acetyl-L-lysyl-[protein] + NAD(+) + H2O = 2''-O-acetyl-ADP-D-ribose + nicotinamide + L-lysyl-[protein]. NAD-dependent protein deacetylase which modulates the activities of several proteins which are inactive in their acetylated form. The chain is NAD-dependent protein deacylase 2 (cobB2) from Pseudomonas aeruginosa (strain ATCC 15692 / DSM 22644 / CIP 104116 / JCM 14847 / LMG 12228 / 1C / PRS 101 / PAO1).